A 340-amino-acid polypeptide reads, in one-letter code: Functional amyloid subunit FapC (340 aa).

The signal sequence occupies residues 1 to 24; it reads MKATMVLTPLALAMAAVLSVSAYA. One copy of the FapC_R1 repeat lies at 67–100; that stretch reads NNASVSGSIKDASGNVGVNVAAGDNNQQANAAAL. The interval 101–133 is linker 1; that stretch reads ASADASFVFGTATASTSVLQSGYGNTLNNYSNP. Residues 134–167 form a FapC_R2 repeat; it reads NTASLSNSANNVSGNLGVNVAAGNFNQQKNDLAA. The segment at 168 to 290 is linker 2; it reads AVSNGQYSTA…AIVGFKTPVT (123 aa). A FapC_R3 repeat occupies 291–324; sequence NNASLSNSLQNVSGNVGVNIAAGGGNQQSNSLSI. The Cys-X-X-Cys signature appears at 328–331; the sequence is CSSC.

Belongs to the FapB/FapC family. As to quaternary structure, the major component of purified amyloid fibrils. Fibrils are resistant to boiling in 2% (weight/vol) SDS and require &gt;90% (vol/vol) formic acid to dissolve. Interacts with FapA in vitro.

Its subcellular location is the fimbrium. The protein resides in the secreted. The major functional amyloid subunit in this bacterium. Upon overexpression of the endogenous six-gene locus (fapA-fapF), cells form large clumps during liquid growth, make large amounts of biofilm and produce amyloid fibrils. This Pseudomonas aeruginosa (strain ATCC 15692 / DSM 22644 / CIP 104116 / JCM 14847 / LMG 12228 / 1C / PRS 101 / PAO1) protein is Functional amyloid subunit FapC.